Reading from the N-terminus, the 456-residue chain is ACT domain-containing protein ACR5 (456 aa).

4 consecutive ACT domains span residues 39-115 (VIKV…FSPS), 130-207 (VVEL…SSGR), 271-347 (IVMI…VSEG), and 349-432 (KLEL…PSPQ).

As to expression, expressed in stems and siliques.

In terms of biological role, may bind amino acids. This Arabidopsis thaliana (Mouse-ear cress) protein is ACT domain-containing protein ACR5.